A 957-amino-acid chain; its full sequence is SLIT and NTRK-like protein 5 (957 aa).

The first 40 residues, 1-40 (MHVCCPPVTLEQDLHRKMHSWMLQTLAFAVTSLVLSCAET), serve as a signal peptide directing secretion. Residues 41-664 (IDYYGEICDN…GTGASSVPLS (624 aa)) lie on the Extracellular side of the membrane. LRR repeat units lie at residues 82-103 (PIYHLLLSGNLLSRLYPNEFVN), 106-127 (GASILHLGSNVIQDIETGAFHG), 130-151 (GLRRLHLNNNKLELLRDDTFLG), 154-175 (NLEYLQVDYNYISVIEPNAFGK), 178-199 (MLQVLILNDNLLSGLPNNLFRF), and 201-222 (PLTHLDLRGNRLKLLPYVGLLQ). The N-linked (GlcNAc...) asparagine glycan is linked to Asn-103. Residues 235-286 (NPWNCSCELISLKDWLDSISYSALVGDVVCETPFRLHGRDLDEVSKQELCPR) form the LRRCT 1 domain. The interval 317 to 358 (ATSSSAVYKPPLKPPKGTRQPNKPRVRPTSRQPSKDLGYSNY) is disordered. The region spanning 365–407 (QTKSPVPLECPTACTCNLQISDLGLNVNCQERKIESIAELQPK) is the LRRNT domain. 6 LRR repeats span residues 410–431 (NPKKMYLTENYITVVRRTDFLE), 434–455 (GLDLLHLGNNRISMIQDRAFGD), 458–479 (NLRRLYLNGNRIERLSPELFYG), 482–503 (SLQYLFLQYNLIREIQAGTFDP), 506–527 (NLQLLFLNNNQLQAMPSGVFSG), and 529–550 (TLLRLNLRGNSFTSLPVSGVLD). An LRRCT 2 domain is found at 563–614 (NPWDCTCDVVGMKLWIEQLKVGVLVDEVICKAPKKFAETYMRSIKSELLCPD). Low complexity predominate over residues 623–632 (PTPSSIQVPS). Residues 623 to 642 (PTPSSIQVPSRTNAATPAVR) are disordered. Residue Asn-644 is glycosylated (N-linked (GlcNAc...) asparagine). The helical transmembrane segment at 665–685 (VLILSLLLVFIMSVFVAAGLF) threads the bilayer. Over 686 to 957 (VLVMKRRKKN…LEKQTTFSQF (272 aa)) the chain is Cytoplasmic. Residues 789 to 844 (SNHHLQQQPPPPPQQPQQQPPPQMQMQPGEEERRESHHLRSPAYSVSTIEPREDLL) are disordered. The segment covering 796–811 (QPPPPPQQPQQQPPPQ) has biased composition (pro residues).

It belongs to the SLITRK family. In the adult, significant expression is detected only in the brain. In the embryo, expressed in the subventricular zone, cortical plate, pyramidal layer of hippocampus, thalamus and hypothalamus.

Its subcellular location is the membrane. Its function is as follows. Suppresses neurite outgrowth. The protein is SLIT and NTRK-like protein 5 (Slitrk5) of Mus musculus (Mouse).